The primary structure comprises 134 residues: uncharacterized protein (134 aa).

Positions 1 to 23 (MWHLRCSNWRGSGVFGMCFSLSG) are cleaved as a signal peptide. C24 carries N-palmitoyl cysteine lipidation. A lipid anchor (S-diacylglycerol cysteine) is attached at C24.

The protein resides in the cell membrane. This is an uncharacterized protein from Treponema pallidum (strain Nichols).